A 198-amino-acid chain; its full sequence is ATP-dependent Clp protease proteolytic subunit (198 aa).

The Nucleophile role is filled by serine 101. The active site involves histidine 126.

This sequence belongs to the peptidase S14 family. Component of the chloroplastic Clp protease core complex.

It is found in the plastid. Its subcellular location is the chloroplast stroma. It catalyses the reaction Hydrolysis of proteins to small peptides in the presence of ATP and magnesium. alpha-casein is the usual test substrate. In the absence of ATP, only oligopeptides shorter than five residues are hydrolyzed (such as succinyl-Leu-Tyr-|-NHMec, and Leu-Tyr-Leu-|-Tyr-Trp, in which cleavage of the -Tyr-|-Leu- and -Tyr-|-Trp bonds also occurs).. Its function is as follows. Cleaves peptides in various proteins in a process that requires ATP hydrolysis. Has a chymotrypsin-like activity. Plays a major role in the degradation of misfolded proteins. The chain is ATP-dependent Clp protease proteolytic subunit from Psilotum nudum (Whisk fern).